We begin with the raw amino-acid sequence, 126 residues long: Small ribosomal subunit protein uS13 (126 aa).

The interval 101–126 is disordered; the sequence is QKTKNNCRTRKGKKKTVANKKKKINK.

Belongs to the universal ribosomal protein uS13 family. Part of the 30S ribosomal subunit. Forms a loose heterodimer with protein S19. Forms two bridges to the 50S subunit in the 70S ribosome.

Its function is as follows. Located at the top of the head of the 30S subunit, it contacts several helices of the 16S rRNA. In the 70S ribosome it contacts the 23S rRNA (bridge B1a) and protein L5 of the 50S subunit (bridge B1b), connecting the 2 subunits; these bridges are implicated in subunit movement. Contacts the tRNAs in the A and P-sites. The polypeptide is Small ribosomal subunit protein uS13 (Karelsulcia muelleri (strain GWSS) (Sulcia muelleri)).